The sequence spans 167 residues: MGLNLTSKQEIVAEIADVASKAYSLVAAEYHGLTVAHLTQLHARARENGVYLRVVKNTLARRALADTEFKAAEEKLVGPLVLAFSMEYPGAAARLWRDFFKENDKISTDIVKFVSISGEVLAGSEFERVAKLPTKEEGISMLMSCMLAPVAKLARTLDAVRQSKEAA.

It belongs to the universal ribosomal protein uL10 family. Part of the ribosomal stalk of the 50S ribosomal subunit. The N-terminus interacts with L11 and the large rRNA to form the base of the stalk. The C-terminus forms an elongated spine to which L12 dimers bind in a sequential fashion forming a multimeric L10(L12)X complex.

Functionally, forms part of the ribosomal stalk, playing a central role in the interaction of the ribosome with GTP-bound translation factors. This Dichelobacter nodosus (strain VCS1703A) protein is Large ribosomal subunit protein uL10.